A 377-amino-acid polypeptide reads, in one-letter code: Nitric oxide reductase FlRd-NAD(+) reductase (377 aa).

This sequence belongs to the FAD-dependent oxidoreductase family. It depends on FAD as a cofactor.

It localises to the cytoplasm. The catalysed reaction is 2 reduced [nitric oxide reductase rubredoxin domain] + NAD(+) + H(+) = 2 oxidized [nitric oxide reductase rubredoxin domain] + NADH. It functions in the pathway nitrogen metabolism; nitric oxide reduction. One of at least two accessory proteins for anaerobic nitric oxide (NO) reductase. Reduces the rubredoxin moiety of NO reductase. This chain is Nitric oxide reductase FlRd-NAD(+) reductase, found in Escherichia coli O127:H6 (strain E2348/69 / EPEC).